The primary structure comprises 418 residues: MKFAIESISKNSGRLGQLRIKDGGPDFKTPLLLQTTKGGSIPWLSADVFESHVSQKPQVLQFTLSTMDHMTEALTHWNSGGGRGLSDYVGLPGHLNILMLRDPCETTPSGGNDRDILPLFTRRGKESLSSERYMEMVASFKPDFYEGLCDADTNLESAKKRIQKSVDRTEKFMHYIYEHRGKVNSTLLAPIVGGYNTFARTQSIKHAREQPAGSYGGYIFEGFHTNGLSATTLDTSKLLPIVEHCVKQLEEDKPRLMPGAYTPLTILELIRQGIDMFDSSYAYCASLNFKALTFSFVQDAVEHAPFLDITDEAIKEDFTPPLSNCSCLTCQKHTRAYLHHLYKTNELLGPILLIVHNLHHYMAFFEKIRESVARDELPRLTEFVRNQNGKTQVDYSIAANTKVISKAAMGKGFAAAAV.

Positions 325, 327, 330, and 356 each coordinate Zn(2+).

The protein belongs to the queuine tRNA-ribosyltransferase family. QTRT2 subfamily. Heterodimer of a catalytic subunit and an accessory subunit. It depends on Zn(2+) as a cofactor.

The protein resides in the cytoplasm. In terms of biological role, non-catalytic subunit of the queuine tRNA-ribosyltransferase (TGT) that catalyzes the base-exchange of a guanine (G) residue with queuine (Q) at position 34 (anticodon wobble position) in tRNAs with GU(N) anticodons (tRNA-Asp, -Asn, -His and -Tyr), resulting in the hypermodified nucleoside queuosine (7-(((4,5-cis-dihydroxy-2-cyclopenten-1-yl)amino)methyl)-7-deazaguanosine). In Drosophila yakuba (Fruit fly), this protein is Queuine tRNA-ribosyltransferase accessory subunit 2.